The sequence spans 216 residues: MQAFTQHEGLVAPLDRENVDTDLIIPKQFLKSIKRAGFGPNLFDELRYLDHGEPGMDNSKRPLNPDFVLNQPRYQGASVLLARKNFGCGSSREHAPWALTQYGFRAIIAPSYADIFFNNSFKNGLLPIVLGELEVARLFDEVKAFPGFKLNIDLERQVVIAPDGRELGFDIEPFRKYCLLNGLDDIGLTLRQADKIRAFEAERLARHPWLESRPVA.

This sequence belongs to the LeuD family. LeuD type 1 subfamily. Heterodimer of LeuC and LeuD.

It carries out the reaction (2R,3S)-3-isopropylmalate = (2S)-2-isopropylmalate. The protein operates within amino-acid biosynthesis; L-leucine biosynthesis; L-leucine from 3-methyl-2-oxobutanoate: step 2/4. In terms of biological role, catalyzes the isomerization between 2-isopropylmalate and 3-isopropylmalate, via the formation of 2-isopropylmaleate. This chain is 3-isopropylmalate dehydratase small subunit 1, found in Bordetella bronchiseptica (strain ATCC BAA-588 / NCTC 13252 / RB50) (Alcaligenes bronchisepticus).